We begin with the raw amino-acid sequence, 447 residues long: Exodeoxyribonuclease 7 large subunit (447 aa).

The protein belongs to the XseA family. In terms of assembly, heterooligomer composed of large and small subunits.

Its subcellular location is the cytoplasm. The enzyme catalyses Exonucleolytic cleavage in either 5'- to 3'- or 3'- to 5'-direction to yield nucleoside 5'-phosphates.. Functionally, bidirectionally degrades single-stranded DNA into large acid-insoluble oligonucleotides, which are then degraded further into small acid-soluble oligonucleotides. This chain is Exodeoxyribonuclease 7 large subunit, found in Streptococcus mutans serotype c (strain ATCC 700610 / UA159).